We begin with the raw amino-acid sequence, 919 residues long: Glutamate receptor ionotropic, kainate 3 (919 aa).

The N-terminal stretch at 1–31 is a signal peptide; the sequence is MTAPWRRLRSLVWEYWAGFLVCAFWIPDSRG. The Extracellular portion of the chain corresponds to 32 to 563; sequence MPHVIRIGGI…VFSFLNPLSP (532 aa). 7 N-linked (GlcNAc...) asparagine glycosylation sites follow: N70, N76, N278, N381, N415, N426, and N433. Residues C99 and C350 are joined by a disulfide bond. The L-glutamate site is built by P518, T520, and R525. N548 and N551 each carry an N-linked (GlcNAc...) asparagine glycan. Residues 564-584 traverse the membrane as a helical segment; the sequence is DIWMYVLLAYLGVSCVLFVIA. The Cytoplasmic segment spans residues 585 to 636; the sequence is RFSPYEWYDAHPCNPGSEVVENNFTLLNSFWFGMGSLMQQGSELMPKALSTR. The helical transmembrane segment at 637 to 657 threads the bilayer; the sequence is IIGGIWWFFTLIIISSYTANL. At 658–820 the chain is on the extracellular side; the sequence is AAFLTVERME…KEASALGIQK (163 aa). A691, T692, and E739 together coordinate L-glutamate. Residue N752 is glycosylated (N-linked (GlcNAc...) asparagine). Residues 821 to 841 form a helical membrane-spanning segment; that stretch reads IGGIFIVLAAGLVLSVLVAVG. Over 842 to 919 the chain is Cytoplasmic; it reads EFIYKLRKTA…CSTSLAPVFP (78 aa). Residue S869 is modified to Phosphoserine. A Glycyl lysine isopeptide (Lys-Gly) (interchain with G-Cter in SUMO1) cross-link involves residue K887.

It belongs to the glutamate-gated ion channel (TC 1.A.10.1) family. GRIK3 subfamily. Homotetramer, and heterotetramer with GRIK4 or GRIK5. Can form functional heteromeric receptors with GRIK2. Interacts with PRKCABP. Interacts with NETO2. As to quaternary structure, homomeric GluR7A forms functional kainate receptors which have very low sensitivity to glutamate. Can form functional heteromeric receptors with GRIK4 and GRIK5. In terms of assembly, homomeric GluR7B forms functional kainate receptors. Mass spectrometry data suggest the protein is N-glycosylated at five distinct sites. In terms of tissue distribution, expressed in the olfactory bulb (at protein level). Expressed in the deep cortical layers, dentate gyrus, reticular thalamic nucleus, mammillary bodies, pons, and cerebellum of the adult.

The protein localises to the cell membrane. It localises to the postsynaptic cell membrane. It catalyses the reaction Ca(2+)(in) = Ca(2+)(out). In terms of biological role, ionotropic glutamate receptor that functions as a cation-permeable ligand-gated ion channel, gated by L-glutamate and the glutamatergic agonist kainic acid. Binding of the excitatory neurotransmitter L-glutamate induces a conformation change, leading to the opening of the cation channel, and thereby converts the chemical signal to an electrical impulse. The receptor then desensitizes rapidly and enters a transient inactive state, characterized by the presence of bound agonist. In association with GRIK2, involved in presynaptic facilitation of glutamate release at hippocampal mossy fiber synapses. Functionally, ionotropic glutamate receptor that functions as a ligand-gated cation channel, gated by L-glutamate and the glutamatergic agonist kainic acid. The protein is Glutamate receptor ionotropic, kainate 3 (Grik3) of Rattus norvegicus (Rat).